Here is a 57-residue protein sequence, read N- to C-terminus: Large ribosomal subunit protein bL32 (57 aa).

This sequence belongs to the bacterial ribosomal protein bL32 family.

This Staphylococcus saprophyticus subsp. saprophyticus (strain ATCC 15305 / DSM 20229 / NCIMB 8711 / NCTC 7292 / S-41) protein is Large ribosomal subunit protein bL32.